Consider the following 1446-residue polypeptide: ABC-type transporter oblD (1446 aa).

5 N-linked (GlcNAc...) asparagine glycosylation sites follow: Asn-9, Asn-28, Asn-222, Asn-281, and Asn-305. The region spanning 104-357 (LEVLSLVSKA…FLDMGFVCPD (254 aa)) is the ABC transporter 1 domain. 6 helical membrane passes run 468–488 (VTIS…SIFY), 502–522 (ALLF…MLTL), 548–568 (MIMD…VLYF), 577–597 (GAFF…SMFF), 610–630 (ALPF…FTIP), and 719–739 (IGVI…ATDF). The region spanning 796–1038 (FQWKDVCFDI…ILIDYFVRNG (243 aa)) is the ABC transporter 2 domain. ATP is bound at residue 832 to 839 (GVSGAGKT). 5 consecutive transmembrane segments (helical) span residues 1147–1167 (ALCV…PNTI), 1177–1197 (IFML…HFVA), 1217–1237 (FIIS…VLMF), 1265–1285 (LMVW…IAAF), and 1301–1321 (LCLI…FWIF). Residues Asn-1344 and Asn-1359 are each glycosylated (N-linked (GlcNAc...) asparagine). A helical membrane pass occupies residues 1412 to 1432 (FGLMWVFIVFNIFAACLLYWW).

It belongs to the ABC transporter superfamily. ABCG family. PDR (TC 3.A.1.205) subfamily.

Its subcellular location is the cell membrane. Its function is as follows. ABC-type transporter; part of the gene cluster that mediates the biosynthesis of the sesterterpenes ophiobolins, fungal phytotoxins with potential anti-cancer activities. Acts as a specific transporter involved in ophiobolins secretion. The sequence is that of ABC-type transporter oblD from Aspergillus clavatus (strain ATCC 1007 / CBS 513.65 / DSM 816 / NCTC 3887 / NRRL 1 / QM 1276 / 107).